Here is a 299-residue protein sequence, read N- to C-terminus: Ribonuclease H2 subunit A (299 aa).

Position 1 is an N-acetylmethionine (methionine 1). In terms of domain architecture, RNase H type-2 spans 28–251 (PCVLGVDEAG…AQSILESEAE (224 aa)). The a divalent metal cation site is built by aspartate 34, glutamate 35, and aspartate 142. 2 positions are modified to phosphothreonine: threonine 205 and threonine 217. Positions 250-272 (AEDVKWEDSETGDPKGPGKIKSY) are disordered. Serine 258 is modified (phosphoserine).

Belongs to the RNase HII family. Eukaryotic subfamily. In terms of assembly, the RNase H2 complex is a heterotrimer composed of the catalytic subunit RNASEH2A and the non-catalytic subunits RNASEH2B and RNASEH2C. Requires Mn(2+) as cofactor. Mg(2+) is required as a cofactor.

The protein localises to the nucleus. It carries out the reaction Endonucleolytic cleavage to 5'-phosphomonoester.. Functionally, catalytic subunit of RNase HII, an endonuclease that specifically degrades the RNA of RNA:DNA hybrids. Participates in DNA replication, possibly by mediating the removal of lagging-strand Okazaki fragment RNA primers during DNA replication. Mediates the excision of single ribonucleotides from DNA:RNA duplexes. The protein is Ribonuclease H2 subunit A (RNASEH2A) of Bos taurus (Bovine).